Consider the following 416-residue polypeptide: Serine hydroxymethyltransferase (416 aa).

Residues Leu-121 and 125–127 contribute to the (6S)-5,6,7,8-tetrahydrofolate site; that span reads GHL. At Lys-229 the chain carries N6-(pyridoxal phosphate)lysine.

This sequence belongs to the SHMT family. In terms of assembly, homodimer. It depends on pyridoxal 5'-phosphate as a cofactor.

It is found in the cytoplasm. It catalyses the reaction (6R)-5,10-methylene-5,6,7,8-tetrahydrofolate + glycine + H2O = (6S)-5,6,7,8-tetrahydrofolate + L-serine. It participates in one-carbon metabolism; tetrahydrofolate interconversion. Its pathway is amino-acid biosynthesis; glycine biosynthesis; glycine from L-serine: step 1/1. Catalyzes the reversible interconversion of serine and glycine with tetrahydrofolate (THF) serving as the one-carbon carrier. This reaction serves as the major source of one-carbon groups required for the biosynthesis of purines, thymidylate, methionine, and other important biomolecules. Also exhibits THF-independent aldolase activity toward beta-hydroxyamino acids, producing glycine and aldehydes, via a retro-aldol mechanism. In Neisseria meningitidis serogroup A / serotype 4A (strain DSM 15465 / Z2491), this protein is Serine hydroxymethyltransferase.